The sequence spans 644 residues: 1-deoxy-D-xylulose-5-phosphate synthase (644 aa).

Residues H78 and 120–122 (GHA) each bind thiamine diphosphate. Mg(2+) is bound at residue D149. Thiamine diphosphate is bound by residues 150 to 151 (AA), N178, and E373. N178 provides a ligand contact to Mg(2+).

The protein belongs to the transketolase family. DXPS subfamily. In terms of assembly, homodimer. The cofactor is Mg(2+). Thiamine diphosphate is required as a cofactor.

The enzyme catalyses D-glyceraldehyde 3-phosphate + pyruvate + H(+) = 1-deoxy-D-xylulose 5-phosphate + CO2. The protein operates within metabolic intermediate biosynthesis; 1-deoxy-D-xylulose 5-phosphate biosynthesis; 1-deoxy-D-xylulose 5-phosphate from D-glyceraldehyde 3-phosphate and pyruvate: step 1/1. In terms of biological role, catalyzes the acyloin condensation reaction between C atoms 2 and 3 of pyruvate and glyceraldehyde 3-phosphate to yield 1-deoxy-D-xylulose-5-phosphate (DXP). The chain is 1-deoxy-D-xylulose-5-phosphate synthase from Chlamydia felis (strain Fe/C-56) (Chlamydophila felis).